The chain runs to 77 residues: Translation initiation factor IF-1, chloroplastic (77 aa).

An S1-like domain is found at 1 to 71; the sequence is MKEQKLIHEG…TRGRIIYRLR (71 aa).

The protein belongs to the IF-1 family. As to quaternary structure, component of the 30S ribosomal translation pre-initiation complex which assembles on the 30S ribosome in the order IF-2 and IF-3, IF-1 and N-formylmethionyl-tRNA(fMet); mRNA recruitment can occur at any time during PIC assembly.

It localises to the plastid. Its subcellular location is the chloroplast. One of the essential components for the initiation of protein synthesis. Stabilizes the binding of IF-2 and IF-3 on the 30S subunit to which N-formylmethionyl-tRNA(fMet) subsequently binds. Helps modulate mRNA selection, yielding the 30S pre-initiation complex (PIC). Upon addition of the 50S ribosomal subunit IF-1, IF-2 and IF-3 are released leaving the mature 70S translation initiation complex. This chain is Translation initiation factor IF-1, chloroplastic, found in Calycanthus floridus var. glaucus (Eastern sweetshrub).